Consider the following 140-residue polypeptide: PDZ domain-containing protein 11 (140 aa).

The 83-residue stretch at threonine 47–tyrosine 129 folds into the PDZ domain.

Its subcellular location is the cytoplasm. The protein is PDZ domain-containing protein 11 (PDZD11) of Gallus gallus (Chicken).